The sequence spans 392 residues: Protein DJ-1 homolog A (392 aa).

2 consecutive PfpI endopeptidase domains span residues 6–174 (KTVL…EQLF) and 212–378 (PQIL…EKFY).

This sequence belongs to the peptidase C56 family. Homodimer. Interacts with CSD1 and GPX2.

It localises to the cytoplasm. The protein localises to the cytosol. It is found in the nucleus. Its function is as follows. Involved in oxidative stress response. Confers protection against diverse stresses by binding both CSD1 and GPX2 and mediating the cytosolic activation of the Cu-Zn-dependent superoxide dismutase activity of CSD1. This is Protein DJ-1 homolog A (DJ1A) from Arabidopsis thaliana (Mouse-ear cress).